Here is a 547-residue protein sequence, read N- to C-terminus: Chaperonin GroEL (547 aa).

ATP-binding positions include 30–33, Lys51, 87–91, Gly415, and Asp495; these read TLGP and DGTTT.

The protein belongs to the chaperonin (HSP60) family. In terms of assembly, forms a cylinder of 14 subunits composed of two heptameric rings stacked back-to-back. Interacts with the co-chaperonin GroES.

It is found in the cytoplasm. The catalysed reaction is ATP + H2O + a folded polypeptide = ADP + phosphate + an unfolded polypeptide.. Its function is as follows. Together with its co-chaperonin GroES, plays an essential role in assisting protein folding. The GroEL-GroES system forms a nano-cage that allows encapsulation of the non-native substrate proteins and provides a physical environment optimized to promote and accelerate protein folding. This Shewanella halifaxensis (strain HAW-EB4) protein is Chaperonin GroEL.